Here is a 1152-residue protein sequence, read N- to C-terminus: MKLKKQVTVCGAAIFCVAVFSLYLMLDRVQHDPARHQNGGNFPRSQISVLQNRIEQLEQLLEENHDIISRIKDSVLELTANAEGPPALLPYHTANGSWAVLPEPRPSFFSVSPQDCQFALGGRGQKPELQMLTVSEDLPFDNVEGGVWRQGFDISYSPNDWDTEDLQVFVVPHSHNDPGWIKTFDKYYTEQTQHILNSMVSKLQEDPRRRFLWAEVSFFAKWWDNISAQKRAAVRRLVGNGQLEIATGGWVMPDEANSHYFALVDQLIEGHQWLERNLGATPRSGWAVDPFGHSSTMPYLLRRANLTSMLIQRVHYAIKKHFAATHSLEFMWRQMWDSDSSTDIFCHMMPFYSYDVPHTCGPDPKICCQFDFKRLPGGRINCPWKVPPRAITEANVADRAALLLDQYRKKSRLFRSNVLLVPLGDDFRYDKPQEWDAQFFNYQRLFDFLNSKPEFHVQAQFGTLSEYFDALYKRTGVEPGARPPGFPVLSGDFFSYADREDHYWTGYYTSRPFYKSLDRVLEAHLRGAEILYSLALAHARRSGLAGQYPLSDFALLTEARRTLGLFQHHDAITGTAKEAVVVDYGVRLLRSLVSLKQVIINAAHYLVLGDQETYSFDPGTPFLQMDDSRVSHDALPERTVIRLDSSPRFVVVFNPLEQERLSVVSLLVNSPRVRVLSEEGQPLSVQISVHWSSATDMVPDVYQVSVPVRLPGLGLGVLQLQPDLDGPYTLQSSVRVYLNGVKLSVSRQSAFPVRVVDSGASDFAISNRYMQVWFSGLTGLLKSIRRVDEEQEQQMELEFLVYGTRTSKDKSGAYLFLPDSEAKPYVPKKPPVLRVTEGPFFSEVAVYYEHFHQVIRLYNLPGVEGLSLDMSFQVDIRDYVNKELALRIHTDIDSQGTFFTDLNGFQIQPRQYLKKLPLQANFYPMPVMAYIQDSQRRLTLHTAQALGVSSLGNGQLEVILDRRLMQDDNRGLGQGLKDNKITCNRFRLLLERRTTMSPEVHQEQERSTSYPSLLSHLTSMYLSTPPLVLPVAKRQGTSPALRSFHPLASPLPCDFHLLNLRMLPAEDTLPATDSALILHRKGFDCGLEAKNLGFNCTTSQGKLALGSLFHGLDVTFLQPTSLTLLYPLASPSNSTDISLEPMEISTFRLRLG.

The Cytoplasmic portion of the chain corresponds to 1 to 5 (MKLKK). A helical; Signal-anchor for type II membrane protein membrane pass occupies residues 6 to 26 (QVTVCGAAIFCVAVFSLYLML). Over 27–796 (DRVQHDPARH…VDEEQEQQME (770 aa)) the chain is Lumenal. Residues 43 to 74 (PRSQISVLQNRIEQLEQLLEENHDIISRIKDS) are a coiled coil. Positions 175 and 177 each coordinate Zn(2+). N225 carries N-linked (GlcNAc...) asparagine glycosylation. D289 lines the Zn(2+) pocket. The active-site Nucleophile is D289. N305 carries N-linked (GlcNAc...) asparagine glycosylation. Zn(2+) is bound at residue H569.

It belongs to the glycosyl hydrolase 38 family. As to quaternary structure, homodimer; disulfide-linked. Interacts with MGAT4D. The cofactor is Zn(2+).

Its subcellular location is the golgi apparatus membrane. The catalysed reaction is N(4)-{beta-D-GlcNAc-(1-&gt;2)-alpha-D-Man-(1-&gt;3)-[alpha-D-Man-(1-&gt;3)-[alpha-D-Man-(1-&gt;6)]-alpha-D-Man-(1-&gt;6)]-beta-D-Man-(1-&gt;4)-beta-D-GlcNAc-(1-&gt;4)-beta-D-GlcNAc}-L-asparaginyl-[protein] + 2 H2O = 2 alpha-D-mannopyranose + an N(4)-{beta-D-GlcNAc-(1-&gt;2)-alpha-D-Man-(1-&gt;3)-[alpha-D-Man-(1-&gt;6)]-beta-D-Man-(1-&gt;4)-beta-D-GlcNAc-(1-&gt;4)-beta-D-GlcNAc}-L-asparaginyl-[protein]. It functions in the pathway protein modification; protein glycosylation. Its function is as follows. Catalyzes the first committed step in the biosynthesis of complex N-glycans. It controls conversion of high mannose to complex N-glycans; the final hydrolytic step in the N-glycan maturation pathway. The chain is Alpha-mannosidase 2x (Man2a2) from Mus musculus (Mouse).